The sequence spans 326 residues: Peptidoglycan-binding protein ArfA (326 aa).

The interval 1–21 is disordered; sequence MASKAGLGQTPATTDARRTQK. The tract at residues 1–73 is required for protein translocation to the outer membrane; that stretch reads MASKAGLGQT…PTLTPTSTRG (73 aa). A helical transmembrane segment spans residues 30–50; that stretch reads PWLIGAVVIPLLIAAIGYGAF. The region spanning 127–196 is the BON domain; sequence DPVVRSLDFS…KIVNNIEVTG (70 aa). Cys-208 and Cys-250 are joined by a disulfide. In terms of domain architecture, OmpA-like spans 212-326; that stretch reads QSAINAVTGG…KNRRVEIVVN (115 aa).

Belongs to the outer membrane OOP (TC 1.B.6) superfamily. ArfA family. Requires Zn(2+) as cofactor.

It localises to the secreted. Its subcellular location is the cell wall. The protein localises to the cell outer membrane. Functionally, probably plays a role in ammonia secretion that neutralizes the medium at pH 5.5, although it does not play a direct role in ammonia transport. The sequence is that of Peptidoglycan-binding protein ArfA (arfA) from Mycobacterium tuberculosis (strain CDC 1551 / Oshkosh).